The primary structure comprises 957 residues: Glycine dehydrogenase (decarboxylating) (957 aa).

Lys708 is subject to N6-(pyridoxal phosphate)lysine.

It belongs to the GcvP family. The glycine cleavage system is composed of four proteins: P, T, L and H. Requires pyridoxal 5'-phosphate as cofactor.

The catalysed reaction is N(6)-[(R)-lipoyl]-L-lysyl-[glycine-cleavage complex H protein] + glycine + H(+) = N(6)-[(R)-S(8)-aminomethyldihydrolipoyl]-L-lysyl-[glycine-cleavage complex H protein] + CO2. In terms of biological role, the glycine cleavage system catalyzes the degradation of glycine. The P protein binds the alpha-amino group of glycine through its pyridoxal phosphate cofactor; CO(2) is released and the remaining methylamine moiety is then transferred to the lipoamide cofactor of the H protein. This chain is Glycine dehydrogenase (decarboxylating), found in Escherichia coli O6:H1 (strain CFT073 / ATCC 700928 / UPEC).